Reading from the N-terminus, the 252-residue chain is Proteasome subunit alpha type-3 (252 aa).

The protein belongs to the peptidase T1A family. As to quaternary structure, the 26S proteasome consists of a 20S proteasome core and two 19S regulatory subunits. The 20S proteasome core is composed of 28 subunits that are arranged in four stacked rings, resulting in a barrel-shaped structure. The two end rings are each formed by seven alpha subunits, and the two central rings are each formed by seven beta subunits. The catalytic chamber with the active sites is on the inside of the barrel.

The protein resides in the cytoplasm. It localises to the nucleus. Its function is as follows. The proteasome is a multicatalytic proteinase complex which is characterized by its ability to cleave peptides with Arg, Phe, Tyr, Leu, and Glu adjacent to the leaving group at neutral or slightly basic pH. The proteasome has an ATP-dependent proteolytic activity. This is Proteasome subunit alpha type-3 from Acanthamoeba castellanii (Amoeba).